The primary structure comprises 274 residues: Adenosylcobinamide-GDP ribazoletransferase (274 aa).

Transmembrane regions (helical) follow at residues V46–F66, T69–F89, I117–I137, W151–L173, H192–M212, E216–I236, and F253–V273.

Belongs to the CobS family. Mg(2+) is required as a cofactor.

It is found in the cell membrane. It catalyses the reaction alpha-ribazole + adenosylcob(III)inamide-GDP = adenosylcob(III)alamin + GMP + H(+). It carries out the reaction alpha-ribazole 5'-phosphate + adenosylcob(III)inamide-GDP = adenosylcob(III)alamin 5'-phosphate + GMP + H(+). Its pathway is cofactor biosynthesis; adenosylcobalamin biosynthesis; adenosylcobalamin from cob(II)yrinate a,c-diamide: step 7/7. Its function is as follows. Joins adenosylcobinamide-GDP and alpha-ribazole to generate adenosylcobalamin (Ado-cobalamin). Also synthesizes adenosylcobalamin 5'-phosphate from adenosylcobinamide-GDP and alpha-ribazole 5'-phosphate. This Corynebacterium diphtheriae (strain ATCC 700971 / NCTC 13129 / Biotype gravis) protein is Adenosylcobinamide-GDP ribazoletransferase.